The following is a 421-amino-acid chain: Forkhead box protein fkh-4 (421 aa).

The fork-head DNA-binding region spans R118–K218.

It is found in the nucleus. Transcription factor. Regulates expression of a class of small RNAs, known as 21U-RNAs, perhaps acting redundantly with fkh-3 and fkh-5. The protein is Forkhead box protein fkh-4 of Caenorhabditis elegans.